A 135-amino-acid chain; its full sequence is Small ribosomal subunit protein uS9 (135 aa).

Positions 107–118 (LVGDPRRTEPHK) are enriched in basic and acidic residues. The disordered stretch occupies residues 107–135 (LVGDPRRTEPHKPNRSTKGPRAKRQKSYR). A compositionally biased stretch (basic residues) spans 119–135 (PNRSTKGPRAKRQKSYR).

The protein belongs to the universal ribosomal protein uS9 family. Part of the 30S ribosomal subunit.

The chain is Small ribosomal subunit protein uS9 from Pyrococcus furiosus (strain ATCC 43587 / DSM 3638 / JCM 8422 / Vc1).